Here is a 359-residue protein sequence, read N- to C-terminus: Dual-specificity RNA methyltransferase RlmN 1 (359 aa).

The Proton acceptor role is filled by E96. Positions 102-335 (FKGRATVCIS…STVRQRRGID (234 aa)) constitute a Radical SAM core domain. C109 and C340 are oxidised to a cystine. 3 residues coordinate [4Fe-4S] cluster: C116, C120, and C123. S-adenosyl-L-methionine contacts are provided by residues 166-167 (GE), S198, 221-223 (SLH), and N297. C340 serves as the catalytic S-methylcysteine intermediate.

Belongs to the radical SAM superfamily. RlmN family. It depends on [4Fe-4S] cluster as a cofactor.

Its subcellular location is the cytoplasm. It catalyses the reaction adenosine(2503) in 23S rRNA + 2 reduced [2Fe-2S]-[ferredoxin] + 2 S-adenosyl-L-methionine = 2-methyladenosine(2503) in 23S rRNA + 5'-deoxyadenosine + L-methionine + 2 oxidized [2Fe-2S]-[ferredoxin] + S-adenosyl-L-homocysteine. The enzyme catalyses adenosine(37) in tRNA + 2 reduced [2Fe-2S]-[ferredoxin] + 2 S-adenosyl-L-methionine = 2-methyladenosine(37) in tRNA + 5'-deoxyadenosine + L-methionine + 2 oxidized [2Fe-2S]-[ferredoxin] + S-adenosyl-L-homocysteine. Its function is as follows. Specifically methylates position 2 of adenine 2503 in 23S rRNA and position 2 of adenine 37 in tRNAs. m2A2503 modification seems to play a crucial role in the proofreading step occurring at the peptidyl transferase center and thus would serve to optimize ribosomal fidelity. The polypeptide is Dual-specificity RNA methyltransferase RlmN 1 (Myxococcus xanthus (strain DK1622)).